Consider the following 645-residue polypeptide: Chaperone protein DnaK (645 aa).

Thr-199 carries the post-translational modification Phosphothreonine; by autocatalysis. Disordered stretches follow at residues 509 to 530 (GALS…AEED) and 615 to 645 (EAGA…EVKE). The span at 518-530 (QMQKDAEANAEED) shows a compositional bias: basic and acidic residues. Residues 615 to 626 (EAGADAAGAAGA) are compositionally biased toward low complexity. Residues 631–645 (GDDDDAIDAEFEVKE) are compositionally biased toward acidic residues.

It belongs to the heat shock protein 70 family.

Functionally, acts as a chaperone. This chain is Chaperone protein DnaK, found in Rhodopirellula baltica (strain DSM 10527 / NCIMB 13988 / SH1).